The following is a 325-amino-acid chain: Xylosidase/arabinosidase (325 aa).

The active-site Proton acceptor is the Asp16. Glu224 acts as the Proton donor in catalysis.

Belongs to the glycosyl hydrolase 43 family.

The enzyme catalyses Hydrolysis of (1-&gt;4)-beta-D-xylans, to remove successive D-xylose residues from the non-reducing termini.. The catalysed reaction is Hydrolysis of terminal non-reducing alpha-L-arabinofuranoside residues in alpha-L-arabinosides.. This Bacteroides ovatus protein is Xylosidase/arabinosidase (xsa).